A 308-amino-acid chain; its full sequence is GTPase IMAP family member 5 (308 aa).

Over 1 to 283 (MEHLQKSTYG…VKSCWSSHTA (283 aa)) the chain is Cytoplasmic. The 204-residue stretch at 24 to 227 (SSCLRILLVG…HSNDLFLHAE (204 aa)) folds into the AIG1-type G domain. GTP contacts are provided by residues 33–41 (GKSGCGKSA), serine 54, 151–153 (RKE), and asparagine 188. The chain crosses the membrane as a helical; Anchor for type IV membrane protein span at residues 284-304 (ACALLIVLGLTLLTTFINLCI). Topologically, residues 305 to 308 (SRCK) are mitochondrial intermembrane.

The protein belongs to the TRAFAC class TrmE-Era-EngA-EngB-Septin-like GTPase superfamily. AIG1/Toc34/Toc159-like paraseptin GTPase family. IAN subfamily. As to quaternary structure, interacts with BAD, BAK1, BAX, BCL2, BCL2L1/Bcl-xL and BCL2L11/BimEL. The interaction with BAX is increased, when cells initiate apoptosis upon IL2 withdrawal. Forms a complex with BCL2L1 or MCL1 and HSPA8/HSC70; the interaction between HSPA8 and BCL2L1 or MCL1 is impaired in the absence of GIMAP5. May interact (via N-terminus) with microtubules. In terms of tissue distribution, expressed in thymus (in thymocytes), spleen (in splenocytes), lymph node and lung. Highly expressed in T lymphocytes. Expressed in B cells and in distinct lineages of hematopoietic bone marrow cells, including natural killer, B, T, myeloid and erythroid lineages. Expressed in liver endothelial cells.

It localises to the lysosome. The protein resides in the lysosome membrane. It is found in the endosome. The protein localises to the multivesicular body membrane. Its subcellular location is the endosome membrane. Its function is as follows. Plays a role in T lymphocyte development and the optimal generation of CD4/CD8 double-positive thymocytes. Inhibitor of GSK3A. May act by sequestering GSK3A in cytoplasmic vesicles and impairing its translocation to the nucleus. Consequently, impairs GSK3A-dependent transcriptional program and regulation of the DNA damage response occurring during T cells proliferation. Required for the survival of bone marrow hematopoietic stem cells, as well as of peripheral T cells, natural killer (NK) and NK T-cell development and the maintenance of normal liver function. May promote the survival of mature T lymphocytes upon cytokine withdrawal. May regulate Ca(2+) homeostasis by modulating lysosomal Ca(2+) stores, preventing its accumulation in the absence of T cell activation. May play a role in mitochondrial DNA segregation in hematopoietic tissues. Is a regulator of liver endothelial cell homeostasis. This Mus musculus (Mouse) protein is GTPase IMAP family member 5 (Gimap5).